The sequence spans 156 residues: Oxidized purine nucleoside triphosphate hydrolase (156 aa).

One can recognise a Nudix hydrolase domain in the interval alanine 3–lysine 132. 2-oxo-dATP is bound at residue threonine 8. Residues threonine 8 and lysine 23 each contribute to the 8-oxo-dGMP site. 8-oxo-dGTP contacts are provided by threonine 8 and lysine 23. N(6)-methyl-AMP is bound by residues threonine 8 and lysine 23. Positions 8 and 23 each coordinate O(6)-methyl-dGMP. Phenylalanine 27 contacts 8-oxo-ATP. Residues asparagine 33 and phenylalanine 35–lysine 38 contribute to the 2-oxo-dATP site. An 8-oxo-dGMP-binding site is contributed by asparagine 33. Residues asparagine 33 and phenylalanine 35–lysine 38 each bind 8-oxo-dGTP. Asparagine 33 contributes to the O(6)-methyl-dGMP binding site. 8-oxo-ATP contacts are provided by residues phenylalanine 35–lysine 38 and glutamate 52. Glycine 36, glutamate 52, glutamate 55, glutamate 56, and glutamate 100 together coordinate Mg(2+). The Nudix box motif lies at glycine 37–glycine 58. Residue glutamate 56 participates in 8-oxo-ATP binding. Tryptophan 117 to aspartate 120 is a 2-oxo-dATP binding site. Position 117–120 (tryptophan 117–aspartate 120) interacts with 8-oxo-dGMP. Tryptophan 117 to aspartate 120 is an 8-oxo-dGTP binding site. Residue tryptophan 117–aspartate 120 coordinates N(6)-methyl-AMP. Tryptophan 117–aspartate 120 serves as a coordination point for O(6)-methyl-dGMP. 8-oxo-ATP is bound at residue tryptophan 117–aspartate 120.

This sequence belongs to the Nudix hydrolase family. As to quaternary structure, monomer. Mg(2+) serves as cofactor. In terms of processing, the N-terminus is blocked. As to expression, widely expressed with highest expression in thymus, testis, embryo and proliferating blood lymphocytes.

It is found in the cytoplasm. Its subcellular location is the cytosol. The protein resides in the mitochondrion matrix. The protein localises to the nucleus. It catalyses the reaction 2-oxo-dATP + H2O = 2-oxo-dAMP + diphosphate + H(+). It carries out the reaction 2-oxo-ATP + H2O = 2-oxo-AMP + diphosphate + H(+). The enzyme catalyses 8-oxo-dGTP + H2O = 8-oxo-dGMP + diphosphate + H(+). The catalysed reaction is 8-oxo-dATP + H2O = 8-oxo-dAMP + diphosphate + H(+). It catalyses the reaction O(6)-methyl-dGTP + H2O = O(6)-methyl-dGMP + diphosphate + H(+). It carries out the reaction N(6)-methyl-dATP + H2O = N(6)-methyl-dAMP + diphosphate + H(+). The enzyme catalyses N(6)-methyl-ATP + H2O = N(6)-methyl-AMP + diphosphate + H(+). Its activity is regulated as follows. Inhibited by 2-oxo-dADP and 8-oxo-dGDP. Its function is as follows. Oxidized purine nucleoside triphosphate hydrolase which is a prominent sanitizer of the oxidized nucleotide pool. Catalyzes the hydrolysis of 2-oxo-dATP (2-hydroxy-dATP) into 2-oxo-dAMP. Also has a significant hydrolase activity toward 2-oxo-ATP, 8-oxo-dGTP and 8-oxo-dATP. Through the hydrolysis of oxidized purine nucleoside triphosphates, prevents their incorporation into DNA and the subsequent transversions A:T to C:G and G:C to T:A. Also catalyzes the hydrolysis of methylated purine nucleoside triphosphate preventing their integration into DNA. Through this antimutagenic activity protects cells from oxidative stress. In Homo sapiens (Human), this protein is Oxidized purine nucleoside triphosphate hydrolase (NUDT1).